The chain runs to 86 residues: Small ribosomal subunit protein uS17 (86 aa).

This sequence belongs to the universal ribosomal protein uS17 family. As to quaternary structure, part of the 30S ribosomal subunit.

Its function is as follows. One of the primary rRNA binding proteins, it binds specifically to the 5'-end of 16S ribosomal RNA. This Chlamydia pneumoniae (Chlamydophila pneumoniae) protein is Small ribosomal subunit protein uS17.